Reading from the N-terminus, the 311-residue chain is 1D-myo-inositol 2-acetamido-2-deoxy-alpha-D-glucopyranoside deacetylase (311 aa).

3 residues coordinate Zn(2+): His-29, Asp-32, and His-162.

It belongs to the MshB deacetylase family. Zn(2+) is required as a cofactor.

The catalysed reaction is 1D-myo-inositol 2-acetamido-2-deoxy-alpha-D-glucopyranoside + H2O = 1D-myo-inositol 2-amino-2-deoxy-alpha-D-glucopyranoside + acetate. Catalyzes the deacetylation of 1D-myo-inositol 2-acetamido-2-deoxy-alpha-D-glucopyranoside (GlcNAc-Ins) in the mycothiol biosynthesis pathway. The sequence is that of 1D-myo-inositol 2-acetamido-2-deoxy-alpha-D-glucopyranoside deacetylase from Corynebacterium efficiens (strain DSM 44549 / YS-314 / AJ 12310 / JCM 11189 / NBRC 100395).